The primary structure comprises 178 residues: Probable inosine/xanthosine triphosphatase (178 aa).

Belongs to the YjjX NTPase family. As to quaternary structure, homodimer. The cofactor is Mg(2+). Mn(2+) is required as a cofactor.

It catalyses the reaction XTP + H2O = XDP + phosphate + H(+). It carries out the reaction ITP + H2O = IDP + phosphate + H(+). In terms of biological role, phosphatase that hydrolyzes non-canonical purine nucleotides such as XTP and ITP to their respective diphosphate derivatives. Probably excludes non-canonical purines from DNA/RNA precursor pool, thus preventing their incorporation into DNA/RNA and avoiding chromosomal lesions. The polypeptide is Probable inosine/xanthosine triphosphatase (Pyrobaculum calidifontis (strain DSM 21063 / JCM 11548 / VA1)).